We begin with the raw amino-acid sequence, 927 residues long: Heat shock protein hsp98 (927 aa).

The region spanning 2–162 is the Clp R domain; it reads TSKMEFTDRA…TDAIQAIRGT (161 aa). Repeat regions lie at residues 7 to 87 and 99 to 162; these read FTDR…LVRL and MAPS…IRGT. The NBD1 stretch occupies residues 179–428; it reads LAKFTIDMTA…AVRVARESQP (250 aa). 224–231 is an ATP binding site; that stretch reads GEPGVGKT. A coiled-coil region spans residues 429–553; sequence EIIDSLERKL…AALNAAAAET (125 aa). Residues 454 to 473 form a disordered region; that stretch reads EASKARLEQAKKDAENVEEE. The tract at residues 562–752 is NBD2; that stretch reads VGPDQINEIV…IVVMTSNLGA (191 aa). 635–642 contributes to the ATP binding site; the sequence is GPSGTGKT. Positions 908 to 927 are disordered; it reads EDAVDEVAPESEMDEDLYDD.

This sequence belongs to the ClpA/ClpB family. In terms of assembly, homohexamer, forming a ring with a central pore.

The protein localises to the cytoplasm. The protein resides in the nucleus. Its function is as follows. Required, in concert with Hsp40 and Hsp70 and small Hsps, for the dissociation, resolubilization and refolding of aggregates of damaged proteins after heat or other environmental stresses. Extracts proteins from aggregates by unfolding and threading them in an ATP-dependent process through the axial channel of the protein hexamer, after which they can be refolded by components of the Hsp70/Hsp40 chaperone system. The chain is Heat shock protein hsp98 (hsp98) from Neurospora crassa (strain ATCC 24698 / 74-OR23-1A / CBS 708.71 / DSM 1257 / FGSC 987).